Consider the following 91-residue polypeptide: Small ribosomal subunit protein uS15 (91 aa).

Belongs to the universal ribosomal protein uS15 family. In terms of assembly, part of the 30S ribosomal subunit. Forms a bridge to the 50S subunit in the 70S ribosome, contacting the 23S rRNA.

In terms of biological role, one of the primary rRNA binding proteins, it binds directly to 16S rRNA where it helps nucleate assembly of the platform of the 30S subunit by binding and bridging several RNA helices of the 16S rRNA. Forms an intersubunit bridge (bridge B4) with the 23S rRNA of the 50S subunit in the ribosome. The sequence is that of Small ribosomal subunit protein uS15 from Rickettsia felis (strain ATCC VR-1525 / URRWXCal2) (Rickettsia azadi).